Here is a 113-residue protein sequence, read N- to C-terminus: U11-theraphotoxin-Hhn1a (113 aa).

The N-terminal stretch at methionine 1–alanine 21 is a signal peptide. Positions aspartate 22–arginine 74 are excised as a propeptide. A compositionally biased stretch (basic and acidic residues) spans leucine 60–asparagine 69. Positions leucine 60–aspartate 83 are disordered. Disulfide bonds link cysteine 75–cysteine 90, cysteine 82–cysteine 95, and cysteine 89–cysteine 110.

It belongs to the neurotoxin 14 (magi-1) family. 01 (HNTX-16) subfamily. Expressed by the venom gland.

It localises to the secreted. Functionally, probable ion channel inhibitor. This Cyriopagopus hainanus (Chinese bird spider) protein is U11-theraphotoxin-Hhn1a.